Consider the following 204-residue polypeptide: uncharacterized protein (204 aa).

The interval 1 to 20 is disordered; the sequence is MQNPLPEVMSPEHDKRTTTP.

This is an uncharacterized protein from Frog virus 3 (isolate Goorha) (FV-3).